Consider the following 161-residue polypeptide: Dihydrofolate reductase (161 aa).

The DHFR domain maps to 2 to 157; the sequence is TLSIIVAHDK…IPHTFLHLVR (156 aa). Substrate is bound at residue 6–8; sequence IVA. NADP(+)-binding positions include 7-8 and 15-20; these read VA and IGYQNQ. Asp-28 contacts substrate. Residue 44–47 participates in NADP(+) binding; it reads GRKT. Arg-58 is a binding site for substrate. Residues 63–66 and 93–98 contribute to the NADP(+) site; these read LTNQ and FGGQTL. Thr-112 provides a ligand contact to substrate.

Belongs to the dihydrofolate reductase family.

The catalysed reaction is (6S)-5,6,7,8-tetrahydrofolate + NADP(+) = 7,8-dihydrofolate + NADPH + H(+). It participates in cofactor biosynthesis; tetrahydrofolate biosynthesis; 5,6,7,8-tetrahydrofolate from 7,8-dihydrofolate: step 1/1. In terms of biological role, key enzyme in folate metabolism. Catalyzes an essential reaction for de novo glycine and purine synthesis, and for DNA precursor synthesis. In Staphylococcus epidermidis, this protein is Dihydrofolate reductase (folA).